The sequence spans 268 residues: tRNA (guanine-N(1)-)-methyltransferase (268 aa).

Residues Gly-113 and 133 to 138 each bind S-adenosyl-L-methionine; that span reads IGDYVL. The disordered stretch occupies residues 238–268; sequence RCPPDPFAHQGPVYEGDQLERPEGGEQGASR.

It belongs to the RNA methyltransferase TrmD family. As to quaternary structure, homodimer.

The protein localises to the cytoplasm. It carries out the reaction guanosine(37) in tRNA + S-adenosyl-L-methionine = N(1)-methylguanosine(37) in tRNA + S-adenosyl-L-homocysteine + H(+). In terms of biological role, specifically methylates guanosine-37 in various tRNAs. This Thermomicrobium roseum (strain ATCC 27502 / DSM 5159 / P-2) protein is tRNA (guanine-N(1)-)-methyltransferase.